Here is a 445-residue protein sequence, read N- to C-terminus: RING finger and transmembrane domain-containing protein 2 (445 aa).

Over 1-183 the chain is Extracellular; sequence MWLLAAHQVL…LLAKLCFQHK (183 aa). A disordered region spans residues 12 to 41; it reads KMQRRHSSNTDNIPPERSRSQALSPEASVD. A helical transmembrane segment spans residues 184-203; that stretch reads LGIAVCIGMASTFAYANSTL. Residues 204–215 are Cytoplasmic-facing; it reads REQVSLKEKRSV. The helical transmembrane segment at 216-236 threads the bilayer; that stretch reads LVILWILAFLAGNTMYVLYTF. At 237-256 the chain is on the extracellular side; it reads SSQQLYSSLIFLKPNLETLD. A helical membrane pass occupies residues 257-277; it reads FFDLLWIVGIADFVLKYITIA. Topologically, residues 278–330 are cytoplasmic; sequence LKCLIVALPKIILAVKSKGKFYLVIEELSQLFRSLVPIQLWYKYIMGDDSSNS. The helical transmembrane segment at 331–351 threads the bilayer; sequence YFLGGVLIVLYSLCKSFDICG. The Extracellular segment spans residues 352–445; the sequence is RVGGLRKALK…GATSAHLQVY (94 aa). The RING-type zinc finger occupies 385 to 423; that stretch reads CAICQAEFRDPMILLCQHVFCEECLCLWLDRERTCPLCR.

Its subcellular location is the membrane. In terms of biological role, E3 ubiquitin-protein ligase that negatively regulates IL3-dependent cellular responses through IL3RA ubiquitination and degradation by the proteasome, having an anti-inflammatory effect. This chain is RING finger and transmembrane domain-containing protein 2 (Rnft2), found in Mus musculus (Mouse).